The primary structure comprises 265 residues: Type-1Ba cytolytic delta-endotoxin (265 aa).

Belongs to the cyt1/cyt2 endotoxin family. Post-translationally, active after proteolytic processing.

Its function is as follows. Kills the larvae of dipteran insects by making pores in the epithelial cell membrane of the insect midgut. This is Type-1Ba cytolytic delta-endotoxin (cyt1Ba1) from Bacillus thuringiensis subsp. neoleoensis.